The sequence spans 352 residues: Phenylalanine--tRNA ligase alpha subunit (352 aa).

E258 contacts Mg(2+).

The protein belongs to the class-II aminoacyl-tRNA synthetase family. Phe-tRNA synthetase alpha subunit type 1 subfamily. As to quaternary structure, tetramer of two alpha and two beta subunits. Mg(2+) is required as a cofactor.

It localises to the cytoplasm. The enzyme catalyses tRNA(Phe) + L-phenylalanine + ATP = L-phenylalanyl-tRNA(Phe) + AMP + diphosphate + H(+). This is Phenylalanine--tRNA ligase alpha subunit from Staphylococcus aureus (strain NCTC 8325 / PS 47).